A 261-amino-acid chain; its full sequence is MTHQTHAYHMVNPSPWPLTGALSALLMTSGLIMWFHFNSTALLTLGLTTNMLTMYQWWRDVIRESTFQGHHTPAVQKGLRYGMILFIISEVLFFTGFFWAFYHSSLAPTPELGGCWPPTGIHPLNPLEVPLLNTSVLLASGVSITWAHHSLMEGNRYHMLQALFITIALGVYFTLLQASEYYEAPFTISDGVYGSTFFVATGFHGLHVIIGSTFLIVCFFRQLKFHFTSSHHFGFEAAAWYWHFVDVVWLFLYMSIYWWGS.

The Mitochondrial matrix portion of the chain corresponds to 1–15 (MTHQTHAYHMVNPSP). A helical membrane pass occupies residues 16–34 (WPLTGALSALLMTSGLIMW). At 35–40 (FHFNST) the chain is on the mitochondrial intermembrane side. The helical transmembrane segment at 41–66 (ALLTLGLTTNMLTMYQWWRDVIREST) threads the bilayer. The Mitochondrial matrix segment spans residues 67 to 72 (FQGHHT). Residues 73-105 (PAVQKGLRYGMILFIISEVLFFTGFFWAFYHSS) traverse the membrane as a helical segment. Residues 106–128 (LAPTPELGGCWPPTGIHPLNPLE) lie on the Mitochondrial intermembrane side of the membrane. The chain crosses the membrane as a helical span at residues 129–152 (VPLLNTSVLLASGVSITWAHHSLM). The Mitochondrial matrix portion of the chain corresponds to 153 to 155 (EGN). The chain crosses the membrane as a helical span at residues 156–183 (RYHMLQALFITIALGVYFTLLQASEYYE). The Mitochondrial intermembrane segment spans residues 184–190 (APFTISD). Residues 191-223 (GVYGSTFFVATGFHGLHVIIGSTFLIVCFFRQL) form a helical membrane-spanning segment. Over 224–232 (KFHFTSSHH) the chain is Mitochondrial matrix. Residues 233-256 (FGFEAAAWYWHFVDVVWLFLYMSI) form a helical membrane-spanning segment. The Mitochondrial intermembrane segment spans residues 257-261 (YWWGS).

The protein belongs to the cytochrome c oxidase subunit 3 family. Component of the cytochrome c oxidase (complex IV, CIV), a multisubunit enzyme composed of 14 subunits. The complex is composed of a catalytic core of 3 subunits MT-CO1, MT-CO2 and MT-CO3, encoded in the mitochondrial DNA, and 11 supernumerary subunits COX4I, COX5A, COX5B, COX6A, COX6B, COX6C, COX7A, COX7B, COX7C, COX8 and NDUFA4, which are encoded in the nuclear genome. The complex exists as a monomer or a dimer and forms supercomplexes (SCs) in the inner mitochondrial membrane with NADH-ubiquinone oxidoreductase (complex I, CI) and ubiquinol-cytochrome c oxidoreductase (cytochrome b-c1 complex, complex III, CIII), resulting in different assemblies (supercomplex SCI(1)III(2)IV(1) and megacomplex MCI(2)III(2)IV(2)).

It is found in the mitochondrion inner membrane. The catalysed reaction is 4 Fe(II)-[cytochrome c] + O2 + 8 H(+)(in) = 4 Fe(III)-[cytochrome c] + 2 H2O + 4 H(+)(out). Its function is as follows. Component of the cytochrome c oxidase, the last enzyme in the mitochondrial electron transport chain which drives oxidative phosphorylation. The respiratory chain contains 3 multisubunit complexes succinate dehydrogenase (complex II, CII), ubiquinol-cytochrome c oxidoreductase (cytochrome b-c1 complex, complex III, CIII) and cytochrome c oxidase (complex IV, CIV), that cooperate to transfer electrons derived from NADH and succinate to molecular oxygen, creating an electrochemical gradient over the inner membrane that drives transmembrane transport and the ATP synthase. Cytochrome c oxidase is the component of the respiratory chain that catalyzes the reduction of oxygen to water. Electrons originating from reduced cytochrome c in the intermembrane space (IMS) are transferred via the dinuclear copper A center (CU(A)) of subunit 2 and heme A of subunit 1 to the active site in subunit 1, a binuclear center (BNC) formed by heme A3 and copper B (CU(B)). The BNC reduces molecular oxygen to 2 water molecules using 4 electrons from cytochrome c in the IMS and 4 protons from the mitochondrial matrix. This is Cytochrome c oxidase subunit 3 (MT-CO3) from Ovis aries (Sheep).